The sequence spans 558 residues: MANDENTDGVNKSEKMEKMCEFIRPMVQNNPDGWGPCELPDQFKDIPYQPFSKSDRLGKISDWTGTAYQDKKFQNKYNSQFGGSGMKAYAYEHDEDETTFHLVDTTRVQKPPYQRGRFGQRNQRMRGRGGQRGGMSQMQALGKLKIHERDRRGQNKRWTRRNQAPIKMRDASVTVRPDWVTIEEMDFPRLSKLTLPGVKEGEDVLCCGAVEYYDKSYDRVNVKNEKPLQRIDRIFHTVTTTDDPVIRKLSKTEGNVYATDAILATIMCCTRSNYSWDIVIEKIGNKLFFDKRDNTEFDLLTVNETSVEPPQDDGNSLNSPRNLALEATFINHNFSQQVLKSNEPRYKFDEPNPFISEEEEGEVASVAYRYRKWDLNNGITLIARCEHDAVMQGPNNETQFLTIKALNEWDSKLANGVEWRRKLDTQRGAVLANELRNNACKLAKWTVQALLAGSDQLKFGYVSRASVRDSSKHVILETQQYKPNEFATQINLNMDNAWGILRCIIDICMNQKDGKYLIMKDPNKPMIRLYDIPDNTFESEGEEEDSDEEEQVKDAFQR.

The RNA gate stretch occupies residues 296–310 (EFDLLTVNETSVEPP). The interval 534 to 558 (DNTFESEGEEEDSDEEEQVKDAFQR) is disordered. Residues 537-551 (FESEGEEEDSDEEEQ) show a composition bias toward acidic residues.

It belongs to the eIF-3 subunit D family. Component of the eukaryotic translation initiation factor 3 (eIF-3) complex.

Its subcellular location is the cytoplasm. In terms of biological role, mRNA cap-binding component of the eukaryotic translation initiation factor 3 (eIF-3) complex, which is involved in protein synthesis of a specialized repertoire of mRNAs and, together with other initiation factors, stimulates binding of mRNA and methionyl-tRNAi to the 40S ribosome. The eIF-3 complex specifically targets and initiates translation of a subset of mRNAs involved in cell proliferation. In the eIF-3 complex, eif3d specifically recognizes and binds the 7-methylguanosine cap of a subset of mRNAs. The chain is Eukaryotic translation initiation factor 3 subunit D from Nasonia vitripennis (Parasitic wasp).